Consider the following 757-residue polypeptide: Catalase-peroxidase (757 aa).

The segment at residues 101–248 (WHSAGTYRIG…LAAVQMGLIY (148 aa)) is a cross-link (tryptophyl-tyrosyl-methioninium (Trp-Tyr) (with M-274)). Histidine 102 acts as the Proton acceptor in catalysis. The tract at residues 210-231 (SEGVHHPDEHSGAKEKASKNSD) is disordered. Over residues 212–231 (GVHHPDEHSGAKEKASKNSD) the composition is skewed to basic and acidic residues. The segment at residues 248-274 (YVNPEGPDGRPDPLASARDIRETFARM) is a cross-link (tryptophyl-tyrosyl-methioninium (Tyr-Met) (with W-101)). Histidine 289 contributes to the heme b binding site. The segment at 293 to 312 (KTHGAAPADNVGPEPEAGEL) is disordered.

The protein belongs to the peroxidase family. Peroxidase/catalase subfamily. As to quaternary structure, homodimer or homotetramer. Heme b is required as a cofactor. Post-translationally, formation of the three residue Trp-Tyr-Met cross-link is important for the catalase, but not the peroxidase activity of the enzyme.

It carries out the reaction H2O2 + AH2 = A + 2 H2O. It catalyses the reaction 2 H2O2 = O2 + 2 H2O. Functionally, bifunctional enzyme with both catalase and broad-spectrum peroxidase activity. In Xylella fastidiosa (strain M12), this protein is Catalase-peroxidase.